The sequence spans 35 residues: Trypsin inhibitor 1 (35 aa).

Disulfide bonds link Cys2/Cys19, Cys9/Cys23, and Cys18/Cys34.

Trypsin inhibitor. In Spinacia oleracea (Spinach), this protein is Trypsin inhibitor 1.